Reading from the N-terminus, the 229-residue chain is MNGAVPMLAIDGPSGAGKGTVAGLLARRLGWNLLDSGALYRLLAFAAVNHGVDLTNEEALKVLAAHLDVQFVAADGSHGQRIILEGEEVTDVIRTEQVGAGASQVAALPAVRDALLQRQRAFLEAPGLVADGRDMGTVVFPDAPLKIFLTASAEERARRRYLQLKAKGADVDQSALLEEIRERDERDSQRAVAPLKPADDAILLDSTEMSIEAVVETIIRHCERQGWDV.

An ATP-binding site is contributed by 12-20 (GPSGAGKGT).

The protein belongs to the cytidylate kinase family. Type 1 subfamily.

It is found in the cytoplasm. The catalysed reaction is CMP + ATP = CDP + ADP. The enzyme catalyses dCMP + ATP = dCDP + ADP. The polypeptide is Cytidylate kinase (Pseudomonas aeruginosa (strain LESB58)).